Consider the following 259-residue polypeptide: Uridylate kinase (259 aa).

Residue 21-24 (KLSG) coordinates ATP. Gly63 is a binding site for UMP. Residues Gly64 and Arg68 each contribute to the ATP site. UMP-binding positions include Asp83 and 144–151 (TGNPYFTT). 3 residues coordinate ATP: Thr171, Phe177, and Asp180.

This sequence belongs to the UMP kinase family. Homohexamer.

Its subcellular location is the cytoplasm. It catalyses the reaction UMP + ATP = UDP + ADP. It participates in pyrimidine metabolism; CTP biosynthesis via de novo pathway; UDP from UMP (UMPK route): step 1/1. Inhibited by UTP. Catalyzes the reversible phosphorylation of UMP to UDP. This is Uridylate kinase from Salinibacter ruber (strain DSM 13855 / M31).